The sequence spans 267 residues: MSALQALSTSRLDGKVALVTGSGRGIGAAIATELANRGASVVVNYANSPDAAQTVVDAIKKNGGDAIALQADVSDVKQTIKLFDDAVAHYGQLDIAVSNSGVVSFGHLKDVTEEEFDRVFAINTRGQFFVAREAYKHLSVGGRIILMGSITGQAKGVPKHTVYSGTKGAIETFVRCMAIDCGDKRITVNCVAPGGIKTDMYHAVCKEYIPNGENLTNEQVDEYAATWSPLNRVGQPIDVARVCGFLASQDGEWINGKVLGIDGAACM.

Positions 26, 72, 99, and 132 each coordinate NADP(+). Catalysis depends on serine 149, which acts as the Proton donor. 4 residues coordinate NADP(+): tyrosine 163, lysine 167, isoleucine 196, and threonine 198. The active-site Proton acceptor is tyrosine 163. Lysine 167 acts as the Lowers pKa of active site Tyr in catalysis.

It belongs to the short-chain dehydrogenases/reductases (SDR) family.

Functionally, reductase; part of the gene cluster that mediates the biosynthesis of elsinochromes, pigments consisting of at least four interconvertible tautomers (A, B, C and D) that have a core phenolic quinone to which various side chains are attached and which play an important role in fungal pathogenesis. The non-reducing polyketide synthase PKS1 was proposed to iteratively catalyze decarboxylation between acetyl-CoA and malonyl-CoA subunits for polyketide chain elongation. The released polyketide undergoes cyclization to form an aromatic ring, and proceeds via serial modification steps to produce the heptaketide back- bone of elsinochrome. As elsinochrome has a symmetrical structure, two identical heptaketides are fused to form a core 1,2-dihydrobenzo-perylene ring structure, which can then be successively modified to produce the various derivatives of elsinochrome. Some of these reactions may be cooperatively carried out, at least in part, by the products of RDT1, OXR1 and PKS1. PRF1, embedded within the elsinochrome cluster possibly functions to stabilize some of the biosynthetic enzymes required for elsinochrome production. As prefoldin is a hexamer containing 2 a and 4 b subunits, additional prefoldin subunits, whose coding genes may not immediately link to the elsinochrome biosynthetic gene cluster, are required to fulfill the chaperone function. In addition, no methyltransferase-coding gene exists within the biosynthetic gene cluster, even though elsinochrome has four methyl groups at positions C3, C7, C8 and C12. Apparently, the identified gene cluster does not contain the entire entourage of genes responsible for elsinochrome biosynthesis. Once elsinochrome is synthesized, it must be exported outside the fungal cells, which is probably accomplished by the ECT1 transporter, to avoid toxicity. The protein is Elsinochrome reductase 1 of Elsinoe fawcettii (Citrus scab fungus).